The chain runs to 653 residues: Chromosomal replication initiator protein DnaA (653 aa).

Residues 1–100 (MADVPADLAA…SAGEPPASAS (100 aa)) are domain I, interacts with DnaA modulators. Residues 86-310 (ITVDDSAGEP…PAPATGPGEP (225 aa)) are disordered. Residues 101–312 (PAPPRYEEPE…PATGPGEPTA (212 aa)) form a domain II region. Basic and acidic residues-rich tracts occupy residues 120–150 (DPYESRGREGYEGYGRHRADDHRQGHNDRHQ) and 221–267 (PSYD…RRNI). A compositionally biased stretch (low complexity) spans 284–310 (GSALPASSGAPGPLAAQPAPATGPGEP). The interval 313–529 (RLNPKYLFDT…GALIRVTAFA (217 aa)) is domain III, AAA+ region. ATP is bound by residues G357, G359, K360, and T361. The tract at residues 530 to 653 (SLNRQPVDLG…TELTNRIKNG (124 aa)) is domain IV, binds dsDNA.

Belongs to the DnaA family. Oligomerizes as a right-handed, spiral filament on DNA at oriC.

It localises to the cytoplasm. Functionally, plays an essential role in the initiation and regulation of chromosomal replication. ATP-DnaA binds to the origin of replication (oriC) to initiate formation of the DNA replication initiation complex once per cell cycle. Binds the DnaA box (a 9 base pair repeat at the origin) and separates the double-stranded (ds)DNA. Forms a right-handed helical filament on oriC DNA; dsDNA binds to the exterior of the filament while single-stranded (ss)DNA is stabiized in the filament's interior. The ATP-DnaA-oriC complex binds and stabilizes one strand of the AT-rich DNA unwinding element (DUE), permitting loading of DNA polymerase. After initiation quickly degrades to an ADP-DnaA complex that is not apt for DNA replication. Binds acidic phospholipids. The chain is Chromosomal replication initiator protein DnaA from Streptomyces avermitilis (strain ATCC 31267 / DSM 46492 / JCM 5070 / NBRC 14893 / NCIMB 12804 / NRRL 8165 / MA-4680).